A 239-amino-acid chain; its full sequence is Peptidyl-tRNA hydrolase (239 aa).

TRNA is bound at residue tyrosine 14. Residue histidine 19 is the Proton acceptor of the active site. Residues phenylalanine 64, asparagine 66, and asparagine 112 each contribute to the tRNA site. The tract at residues 186–239 is disordered; the sequence is RTAPPRPSTGTGRPPAKTPARAEEPPAPAASPAPATAPLPDARSPLQKLVDRFK. Residues 193 to 204 show a composition bias toward low complexity; sequence STGTGRPPAKTP. Residues 210-222 show a composition bias toward pro residues; the sequence is PPAPAASPAPATA.

Belongs to the PTH family. As to quaternary structure, monomer.

Its subcellular location is the cytoplasm. It catalyses the reaction an N-acyl-L-alpha-aminoacyl-tRNA + H2O = an N-acyl-L-amino acid + a tRNA + H(+). Functionally, hydrolyzes ribosome-free peptidyl-tRNAs (with 1 or more amino acids incorporated), which drop off the ribosome during protein synthesis, or as a result of ribosome stalling. Catalyzes the release of premature peptidyl moieties from peptidyl-tRNA molecules trapped in stalled 50S ribosomal subunits, and thus maintains levels of free tRNAs and 50S ribosomes. This is Peptidyl-tRNA hydrolase from Ruegeria pomeroyi (strain ATCC 700808 / DSM 15171 / DSS-3) (Silicibacter pomeroyi).